The sequence spans 476 residues: Homeobox protein invected (476 aa).

3 disordered regions span residues M1–I43, K273–D331, and D347–G381. Residues S23 to P32 show a composition bias toward polar residues. Composition is skewed to basic and acidic residues over residues E33–I43 and K292–D305. Positions G318–D331 are enriched in low complexity. The homeobox DNA-binding region spans E372 to S431.

This sequence belongs to the engrailed homeobox family. As to expression, expressed in the middle silk gland but not in the posterior silk gland during the fourth molt/fifth intermolt period.

It localises to the nucleus. In terms of biological role, this protein might be involved in the compartmentalization of the silk gland. The protein is Homeobox protein invected (INV) of Bombyx mori (Silk moth).